Consider the following 431-residue polypeptide: Probable carboxylic ester hydrolase LipM (431 aa).

3 helical membrane-spanning segments follow: residues 7–27 (IHVI…AATI), 38–58 (FASL…LPTL), and 75–95 (PVRA…LNLS). Residues Ser-261, Asp-357, and His-390 contribute to the active site.

The protein belongs to the 'GDXG' lipolytic enzyme family.

The protein resides in the membrane. The sequence is that of Probable carboxylic ester hydrolase LipM from Mycobacterium tuberculosis (strain ATCC 25618 / H37Rv).